The chain runs to 321 residues: GTP 3',8-cyclase (321 aa).

In terms of domain architecture, Radical SAM core spans 5–227 (SYDRVVDYLR…DEGYDGASPS (223 aa)). A GTP-binding site is contributed by R14. [4Fe-4S] cluster-binding residues include C21 and C25. Position 27 (Y27) interacts with S-adenosyl-L-methionine. [4Fe-4S] cluster is bound at residue C28. R64 contacts GTP. S-adenosyl-L-methionine is bound at residue G68. A GTP-binding site is contributed by T95. S119 provides a ligand contact to S-adenosyl-L-methionine. Position 155 (K155) interacts with GTP. M189 is an S-adenosyl-L-methionine binding site. [4Fe-4S] cluster-binding residues include C249 and C252. GTP is bound at residue 254–256 (RIR). Position 266 (C266) interacts with [4Fe-4S] cluster.

The protein belongs to the radical SAM superfamily. MoaA family. Monomer and homodimer. [4Fe-4S] cluster serves as cofactor.

It catalyses the reaction GTP + AH2 + S-adenosyl-L-methionine = (8S)-3',8-cyclo-7,8-dihydroguanosine 5'-triphosphate + 5'-deoxyadenosine + L-methionine + A + H(+). It functions in the pathway cofactor biosynthesis; molybdopterin biosynthesis. In terms of biological role, catalyzes the cyclization of GTP to (8S)-3',8-cyclo-7,8-dihydroguanosine 5'-triphosphate. The chain is GTP 3',8-cyclase from Sulfurimonas denitrificans (strain ATCC 33889 / DSM 1251) (Thiomicrospira denitrificans (strain ATCC 33889 / DSM 1251)).